The sequence spans 496 residues: ATP synthase subunit beta, chloroplastic (496 aa).

170–177 (GGAGVGKT) is a binding site for ATP.

This sequence belongs to the ATPase alpha/beta chains family. As to quaternary structure, F-type ATPases have 2 components, CF(1) - the catalytic core - and CF(0) - the membrane proton channel. CF(1) has five subunits: alpha(3), beta(3), gamma(1), delta(1), epsilon(1). CF(0) has four main subunits: a(1), b(1), b'(1) and c(9-12).

Its subcellular location is the plastid. The protein resides in the chloroplast thylakoid membrane. It catalyses the reaction ATP + H2O + 4 H(+)(in) = ADP + phosphate + 5 H(+)(out). Produces ATP from ADP in the presence of a proton gradient across the membrane. The catalytic sites are hosted primarily by the beta subunits. The chain is ATP synthase subunit beta, chloroplastic from Trachycarpus fortunei (Chinese windmill palm).